The following is a 138-amino-acid chain: Ribulose bisphosphate carboxylase small subunit (138 aa).

This sequence belongs to the RuBisCO small chain family. In terms of assembly, heterohexadecamer of 8 large and 8 small subunits.

Its subcellular location is the plastid. The protein resides in the chloroplast. In terms of biological role, ruBisCO catalyzes two reactions: the carboxylation of D-ribulose 1,5-bisphosphate, the primary event in carbon dioxide fixation, as well as the oxidative fragmentation of the pentose substrate in the photorespiration process. Both reactions occur simultaneously and in competition at the same active site. Although the small subunit is not catalytic it is essential for maximal activity. The protein is Ribulose bisphosphate carboxylase small subunit of Pyropia dentata (Red alga).